Reading from the N-terminus, the 1530-residue chain is Coiled-coil domain-containing protein 141 (1530 aa).

The stretch at 49-127 (NLLEIGSSQD…SMLERRRELL (79 aa)) is one Spectrin repeat. Thr91 carries the phosphothreonine modification. 3 coiled-coil regions span residues 220–251 (IDSLLELLQDRRRQLDKHLQQQRQELSQVLQL), 758–785 (LKEKAEQLKDLIHLHQRQRERIQEYEEI), and 865–967 (AKSL…VNKK). 4 disordered regions span residues 1153–1240 (SEER…PASS), 1259–1285 (LGKAPESVLPPPTAFTDGYHNKKDTFT), 1324–1356 (PREVHDKALPPSSQAQEISLGTQEKVHADSNVT), and 1369–1403 (SPGLSSQSDTSRSHQRQVGPQGDRKNSSAEKSVVS). The segment covering 1334–1345 (PSSQAQEISLGT) has biased composition (polar residues). Residues 1409–1497 (PHFSRLLSNV…GTLSSKAILH (89 aa)) enclose the Ig-like domain.

As to quaternary structure, interacts with DISC1. Interacts preferentially with phosphorylated forms of myosin regulatory light chain (MRLC). Interacts (via the N-terminal region) with HDAC6; inhibits the deacetylase activity of HDAC6. Interacts with KIBRA (via the C-terminal region); retains AMPAR in the cytosol after internalization. In terms of processing, ubiquitinated and degradated by the CDC20-APC/C pathway. During brain development, CDC20-APC/C complex degrades CCDC141 after centrosome translocation into the dilated area. CCDC141 is restabilized in the dilation until the centrosome enters the dilation, at which point it is once again immediately destabilized by CDC20-APC/C complex. The oscillatory regulation of CCDC141 protein is needed for proper cortical migration. Phosphorylation at Thr-91 by PLK1 affects CCDC141 degradation.

It localises to the cytoplasm. It is found in the cytoskeleton. Its subcellular location is the microtubule organizing center. The protein localises to the centrosome. In terms of biological role, plays a critical role in cortical radial and GnRH neurons migration during brain development. Regulates cortical radial migration by negatively controlling the activity of histone deacetylase 6 (HDAC6) and promotes centrosome maturation. CAMDI is required for dilation formation of cortical neurons during radial migration. Plays a critical role in learning and memory performance through regulation of AMPA-selective glutamate receptors (AMPARs) cell surface expression in competition with KIBRA. This chain is Coiled-coil domain-containing protein 141, found in Rattus norvegicus (Rat).